The sequence spans 389 residues: Chalcone synthase 6 (389 aa).

Residue cysteine 164 is part of the active site.

The protein belongs to the thiolase-like superfamily. Chalcone/stilbene synthases family.

It catalyses the reaction (E)-4-coumaroyl-CoA + 3 malonyl-CoA + 3 H(+) = 2',4,4',6'-tetrahydroxychalcone + 3 CO2 + 4 CoA. Its pathway is secondary metabolite biosynthesis; flavonoid biosynthesis. Functionally, the primary product of this enzyme is 4,2',4',6'-tetrahydroxychalcone (also termed naringenin-chalcone or chalcone) which can under specific conditions spontaneously isomerize into naringenin. The sequence is that of Chalcone synthase 6 (CHS6) from Trifolium subterraneum (Subterranean clover).